A 175-amino-acid polypeptide reads, in one-letter code: Apoptosis regulator Bcl-2 homolog (175 aa).

Positions glutamine 75–alanine 94 match the BH1 motif. The BH2 signature appears at serine 105 to alanine 120.

It belongs to the Bcl-2 family. As to quaternary structure, interacts with host BAX; this interaction inhibits BAX oligomerization and subsequent activation. Interacts with host BAK1.

It localises to the host mitochondrion. Its function is as follows. Plays a role in the inhibition of host apoptosis by sequestering and inactivating multiple proapoptotic BCL-2 proteins, including BAK1 and BAX. This is Apoptosis regulator Bcl-2 homolog from Vertebrata (FPV).